A 217-amino-acid polypeptide reads, in one-letter code: Orotidine 5'-phosphate decarboxylase (217 aa).

Residues Asp14, Lys36, 64–73 (DFKVADIPST), Ser120, 172–182 (PGVGAQGGNLS), Gly197, and Arg198 contribute to the substrate site. Lys66 functions as the Proton donor in the catalytic mechanism.

It belongs to the OMP decarboxylase family. Type 1 subfamily. Homodimer.

It catalyses the reaction orotidine 5'-phosphate + H(+) = UMP + CO2. Its pathway is pyrimidine metabolism; UMP biosynthesis via de novo pathway; UMP from orotate: step 2/2. Catalyzes the decarboxylation of orotidine 5'-monophosphate (OMP) to uridine 5'-monophosphate (UMP). The chain is Orotidine 5'-phosphate decarboxylase from Methanococcus maripaludis (strain DSM 14266 / JCM 13030 / NBRC 101832 / S2 / LL).